The following is a 119-amino-acid chain: Putative membrane protein insertion efficiency factor (119 aa).

Residues 82 to 119 form a disordered region; it reads NALRGEKGGESAADVPSGGSVSEPPGPAAETSPNAQGA.

Belongs to the UPF0161 family.

It is found in the cell membrane. Its function is as follows. Could be involved in insertion of integral membrane proteins into the membrane. The chain is Putative membrane protein insertion efficiency factor from Streptomyces griseus subsp. griseus (strain JCM 4626 / CBS 651.72 / NBRC 13350 / KCC S-0626 / ISP 5235).